Consider the following 366-residue polypeptide: Mannonate dehydratase (366 aa).

The protein belongs to the mannonate dehydratase family. The cofactor is Fe(2+). Mn(2+) serves as cofactor.

It catalyses the reaction D-mannonate = 2-dehydro-3-deoxy-D-gluconate + H2O. The protein operates within carbohydrate metabolism; pentose and glucuronate interconversion. In terms of biological role, catalyzes the dehydration of D-mannonate. In Streptococcus pneumoniae (strain 70585), this protein is Mannonate dehydratase.